Consider the following 85-residue polypeptide: Phosphocarrier protein HPr (85 aa).

The HPr domain occupies 1–85 (MFQQEVTITA…HLVKLMAELE (85 aa)). His15 acts as the Pros-phosphohistidine intermediate in catalysis.

The protein belongs to the HPr family.

It is found in the cytoplasm. Functionally, general (non sugar-specific) component of the phosphoenolpyruvate-dependent sugar phosphotransferase system (sugar PTS). This major carbohydrate active-transport system catalyzes the phosphorylation of incoming sugar substrates concomitantly with their translocation across the cell membrane. The phosphoryl group from phosphoenolpyruvate (PEP) is transferred to the phosphoryl carrier protein HPr by enzyme I. Phospho-HPr then transfers it to the PTS EIIA domain. The polypeptide is Phosphocarrier protein HPr (ptsH) (Escherichia coli O157:H7).